The sequence spans 168 residues: Ribosome rescue factor SmrB (168 aa).

In terms of domain architecture, Smr spans 92–167 (LDLHGLTKEQ…GDAAILILFE (76 aa)).

The protein belongs to the SmrB family. In terms of assembly, associates with collided ribosomes, but not with correctly translating polysomes.

Acts as a ribosome collision sensor. Detects stalled/collided disomes (pairs of ribosomes where the leading ribosome is stalled and a second ribosome has collided with it) and endonucleolytically cleaves mRNA at the 5' boundary of the stalled ribosome. Stalled/collided disomes form a new interface (primarily via the 30S subunits) that binds SmrB. Cleaved mRNA becomes available for tmRNA ligation, leading to ribosomal subunit dissociation and rescue of stalled ribosomes. This chain is Ribosome rescue factor SmrB, found in Pasteurella multocida (strain Pm70).